A 256-amino-acid polypeptide reads, in one-letter code: MKLKPLILSNWKLNGNCLLVKKILLKLNEKLKNKNNLKVVIAPPVIYLSEFKKYVLKKNIFLAAQNVDVNLTGSFTGEISPIMLYEFGVKYVIIGHSERRLYHNESIEDVTKKFLILKKFNLIPVLCIGETKKNKDDKCIENEIVKQIDFILKKIGIEGFINTVIAYEPTWAIGKKDSASPKYIQKIHKFIRNYLSKYDNDISKKIILQYGGSVNSKNVKKIISQKDVNGVLLGRSSTNIEEFLYILDIIEKTKKS.

Position 10 to 12 (10 to 12) interacts with substrate; that stretch reads NWK. The active-site Electrophile is His96. The active-site Proton acceptor is Glu168. Substrate-binding residues include Gly174 and Ser213.

The protein belongs to the triosephosphate isomerase family. Homodimer.

It is found in the cytoplasm. It catalyses the reaction D-glyceraldehyde 3-phosphate = dihydroxyacetone phosphate. It participates in carbohydrate biosynthesis; gluconeogenesis. It functions in the pathway carbohydrate degradation; glycolysis; D-glyceraldehyde 3-phosphate from glycerone phosphate: step 1/1. Functionally, involved in the gluconeogenesis. Catalyzes stereospecifically the conversion of dihydroxyacetone phosphate (DHAP) to D-glyceraldehyde-3-phosphate (G3P). The chain is Triosephosphate isomerase from Wigglesworthia glossinidia brevipalpis.